The sequence spans 850 residues: Bifunctional levopimaradiene synthase, chloroplastic (850 aa).

Residues 1–52 (MALPSSSLSSQIHTGATTQCIPHFHGSLNAGTSAGKRRSLYLRWGKGPSKIV) constitute a chloroplast transit peptide. Lysine 250 serves as a coordination point for substrate. 2 residues coordinate Mg(2+): aspartate 383 and aspartate 385. Positions 383 to 386 (DIDD) match the DXDD motif motif. Lysine 470 lines the substrate pocket. Mg(2+)-binding residues include aspartate 602, aspartate 606, asparagine 746, threonine 750, and glutamate 754. The DDXXD motif motif lies at 602-606 (DDLYD).

It belongs to the terpene synthase family. Tpsd subfamily. It depends on Mg(2+) as a cofactor.

The protein localises to the plastid. The protein resides in the chloroplast. The enzyme catalyses (2E,6E,10E)-geranylgeranyl diphosphate = (+)-copalyl diphosphate. It catalyses the reaction (+)-copalyl diphosphate = abieta-7,13-diene + diphosphate. The catalysed reaction is (+)-copalyl diphosphate = abieta-8(14),12-diene + diphosphate. It carries out the reaction (+)-copalyl diphosphate = neoabietadiene + diphosphate. It participates in terpene metabolism; oleoresin biosynthesis. Its function is as follows. Involved in defensive oleoresin formation in conifers in response to insect attack or other injury. Involved in diterpene (C20) olefins biosynthesis. Bifunctional enzyme that catalyzes two sequential cyclizations of geranylgeranyl diphosphate (GGPP) to levopimaradiene. Levopimaradiene is the major products of the enzyme with abietadiene and neoabietadiene. No activity with farnesyl diphosphate (FPP) as substrate. The sequence is that of Bifunctional levopimaradiene synthase, chloroplastic from Pinus contorta (Shore pine).